A 491-amino-acid polypeptide reads, in one-letter code: Probable polygalacturonase (491 aa).

The helical transmembrane segment at 15-35 (PIVSFYCFQVVSVLVAVVLLL) threads the bilayer. N-linked (GlcNAc...) asparagine glycosylation is found at asparagine 165, asparagine 175, and asparagine 214. PbH1 repeat units lie at residues 230–256 (SRNI…NPDS), 257–278 (CTNT…AVKS), 319–340 (IQDV…RIKT), and 348–369 (VKDI…WMTG). Catalysis depends on aspartate 271, which acts as the Proton donor. N-linked (GlcNAc...) asparagine glycans are attached at residues asparagine 399 and asparagine 421.

Belongs to the glycosyl hydrolase 28 family.

The protein localises to the membrane. It catalyses the reaction (1,4-alpha-D-galacturonosyl)n+m + H2O = (1,4-alpha-D-galacturonosyl)n + (1,4-alpha-D-galacturonosyl)m.. The polypeptide is Probable polygalacturonase (Vitis vinifera (Grape)).